We begin with the raw amino-acid sequence, 121 residues long: Small ribosomal subunit protein bS6m (121 aa).

It belongs to the bacterial ribosomal protein bS6 family. Component of the mitochondrial ribosome small subunit (28S) which comprises a 12S rRNA and about 30 distinct proteins.

It is found in the mitochondrion. The chain is Small ribosomal subunit protein bS6m (MRPS6) from Gallus gallus (Chicken).